A 133-amino-acid polypeptide reads, in one-letter code: Hydrogenase maturation factor HypA (133 aa).

His-2 provides a ligand contact to Ni(2+). Residues Cys-73, Cys-75, Cys-105, and Cys-108 each contribute to the Zn(2+) site.

This sequence belongs to the HypA/HybF family.

Functionally, involved in the maturation of [NiFe] hydrogenases. Required for nickel insertion into the metal center of the hydrogenase. In Methanosarcina acetivorans (strain ATCC 35395 / DSM 2834 / JCM 12185 / C2A), this protein is Hydrogenase maturation factor HypA.